A 229-amino-acid chain; its full sequence is GTP cyclohydrolase 1 (229 aa).

Positions 1–21 (MTLAKPGSGSQSRMDDKAHFK) are disordered. Residues cysteine 116, histidine 119, and cysteine 187 each coordinate Zn(2+).

Belongs to the GTP cyclohydrolase I family. Toroid-shaped homodecamer, composed of two pentamers of five dimers.

The enzyme catalyses GTP + H2O = 7,8-dihydroneopterin 3'-triphosphate + formate + H(+). It participates in cofactor biosynthesis; 7,8-dihydroneopterin triphosphate biosynthesis; 7,8-dihydroneopterin triphosphate from GTP: step 1/1. The sequence is that of GTP cyclohydrolase 1 from Synechococcus sp. (strain JA-2-3B'a(2-13)) (Cyanobacteria bacterium Yellowstone B-Prime).